A 183-amino-acid polypeptide reads, in one-letter code: Pectinesterase inhibitor 8 (183 aa).

The first 30 residues, 1 to 30 (MAQRASRRPAAAAAAVVVAVVLAVSGGVGA), serve as a signal peptide directing secretion. 2 disulfides stabilise this stretch: cysteine 36–cysteine 51 and cysteine 107–cysteine 147.

It belongs to the PMEI family.

Its subcellular location is the secreted. It is found in the extracellular space. The protein localises to the apoplast. Pectin methylesterase (PME) inhibitor that inhibits PME in vitro. The protein is Pectinesterase inhibitor 8 of Oryza sativa subsp. japonica (Rice).